The following is a 720-amino-acid chain: Catalase-peroxidase (720 aa).

The segment at residues 94 to 222 is a cross-link (tryptophyl-tyrosyl-methioninium (Trp-Tyr) (with M-248)); it reads WHAAGTYRIA…LAAVTMGLIY (129 aa). The Proton acceptor role is filled by His-95. A cross-link (tryptophyl-tyrosyl-methioninium (Tyr-Met) (with W-94)) is located at residues 222-248; it reads YVNPEGVDGNPDPLKTAHDVRVTFARM. Residue His-263 coordinates heme b.

This sequence belongs to the peroxidase family. Peroxidase/catalase subfamily. Homodimer. Heme b serves as cofactor. Formation of the three residue Trp-Tyr-Met cross-link is important for the catalase, but not the peroxidase activity of the enzyme.

It catalyses the reaction H2O2 + AH2 = A + 2 H2O. It carries out the reaction 2 H2O2 = O2 + 2 H2O. In terms of biological role, bifunctional enzyme with both catalase and broad-spectrum peroxidase activity. In Synechococcus elongatus (strain ATCC 33912 / PCC 7942 / FACHB-805) (Anacystis nidulans R2), this protein is Catalase-peroxidase.